Here is a 90-residue protein sequence, read N- to C-terminus: UPF0298 protein RBAM_014860 (90 aa).

The protein belongs to the UPF0298 family.

It is found in the cytoplasm. The sequence is that of UPF0298 protein RBAM_014860 from Bacillus velezensis (strain DSM 23117 / BGSC 10A6 / LMG 26770 / FZB42) (Bacillus amyloliquefaciens subsp. plantarum).